The chain runs to 101 residues: Small ribosomal subunit protein uS10 (101 aa).

It belongs to the universal ribosomal protein uS10 family. In terms of assembly, part of the 30S ribosomal subunit.

Its function is as follows. Involved in the binding of tRNA to the ribosomes. The chain is Small ribosomal subunit protein uS10 from Ureaplasma parvum serovar 3 (strain ATCC 27815 / 27 / NCTC 11736).